A 120-amino-acid chain; its full sequence is Large ribosomal subunit protein uL18 (120 aa).

The protein belongs to the universal ribosomal protein uL18 family. As to quaternary structure, part of the 50S ribosomal subunit; part of the 5S rRNA/L5/L18/L25 subcomplex. Contacts the 5S and 23S rRNAs.

This is one of the proteins that bind and probably mediate the attachment of the 5S RNA into the large ribosomal subunit, where it forms part of the central protuberance. This chain is Large ribosomal subunit protein uL18, found in Lawsonia intracellularis (strain PHE/MN1-00).